The chain runs to 361 residues: Protein-L-isoaspartate O-methyltransferase domain-containing protein 2 (361 aa).

A lipid anchor (N-myristoyl glycine) is attached at glycine 2. Serine 64 is a catalytic residue. AdoMet binding motif regions lie at residues 85 to 94 (LNLGSGTGYL), 160 to 164 (YDRVY), and 181 to 191 (LKVGGILVMPL). The interval 240-250 (VRSLQDLARIA) is BC-box. The segment covering 303–312 (SNPSDDNSSG) has biased composition (polar residues). Positions 303–335 (SNPSDDNSSGDLEEERREEEATTPPDAKPEPPV) are disordered. A CUL-box region spans residues 345-348 (LPLP).

The protein belongs to the methyltransferase superfamily. L-isoaspartyl/D-aspartyl protein methyltransferase family.

Its subcellular location is the cytoplasm. Functionally, may act as a substrate recognition component of an ECS (Elongin BC-CUL5-SOCS-box protein) E3 ubiquitin ligase complex which mediates the ubiquitination and subsequent proteasomal degradation of target proteins. May bind to the methyltransferase cofactor S-adenosylmethionine (AdoMet) via the N-terminal AdoMet binding motif, but probably does not display methyltransferase activity. The chain is Protein-L-isoaspartate O-methyltransferase domain-containing protein 2 (PCMTD2) from Bos taurus (Bovine).